The following is a 283-amino-acid chain: 4-diphosphocytidyl-2-C-methyl-D-erythritol kinase (283 aa).

Residue lysine 10 is part of the active site. 99–109 (PMGGGLGGGSS) serves as a coordination point for ATP. Aspartate 141 is an active-site residue.

The protein belongs to the GHMP kinase family. IspE subfamily. As to quaternary structure, homodimer.

The catalysed reaction is 4-CDP-2-C-methyl-D-erythritol + ATP = 4-CDP-2-C-methyl-D-erythritol 2-phosphate + ADP + H(+). It participates in isoprenoid biosynthesis; isopentenyl diphosphate biosynthesis via DXP pathway; isopentenyl diphosphate from 1-deoxy-D-xylulose 5-phosphate: step 3/6. Catalyzes the phosphorylation of the position 2 hydroxy group of 4-diphosphocytidyl-2C-methyl-D-erythritol. The sequence is that of 4-diphosphocytidyl-2-C-methyl-D-erythritol kinase from Escherichia coli O81 (strain ED1a).